The sequence spans 284 residues: Bifunctional protein FolD (284 aa).

Residues 165 to 167 (GRS), Ser-190, and Val-231 contribute to the NADP(+) site.

The protein belongs to the tetrahydrofolate dehydrogenase/cyclohydrolase family. In terms of assembly, homodimer.

It catalyses the reaction (6R)-5,10-methylene-5,6,7,8-tetrahydrofolate + NADP(+) = (6R)-5,10-methenyltetrahydrofolate + NADPH. It carries out the reaction (6R)-5,10-methenyltetrahydrofolate + H2O = (6R)-10-formyltetrahydrofolate + H(+). It functions in the pathway one-carbon metabolism; tetrahydrofolate interconversion. Catalyzes the oxidation of 5,10-methylenetetrahydrofolate to 5,10-methenyltetrahydrofolate and then the hydrolysis of 5,10-methenyltetrahydrofolate to 10-formyltetrahydrofolate. The polypeptide is Bifunctional protein FolD (Bacillus licheniformis (strain ATCC 14580 / DSM 13 / JCM 2505 / CCUG 7422 / NBRC 12200 / NCIMB 9375 / NCTC 10341 / NRRL NRS-1264 / Gibson 46)).